A 212-amino-acid polypeptide reads, in one-letter code: MKWKEFIINQTKQDYLRNIIQKVNTIENHQVVYPLKKQRFRCFNFFDIEQTKVVILGQDPYHTPKMANGLCFSVDLGNNLPGSLVNIFKALEYDLQIKRTNPDLSDWAKQGVLLLNTVLTVNAHQANSHKDFGYDQLIKNAFIELKKQKHVVYLLWGKQAMSYIDLIDKDHNLILCAPHPSPLSAHRGFLTCKHFSACNDYLIKHFRTPIKW.

The active-site Proton acceptor is the aspartate 59.

Belongs to the uracil-DNA glycosylase (UDG) superfamily. UNG family.

It localises to the cytoplasm. The enzyme catalyses Hydrolyzes single-stranded DNA or mismatched double-stranded DNA and polynucleotides, releasing free uracil.. In terms of biological role, excises uracil residues from the DNA which can arise as a result of misincorporation of dUMP residues by DNA polymerase or due to deamination of cytosine. The protein is Uracil-DNA glycosylase of Ureaplasma urealyticum serovar 10 (strain ATCC 33699 / Western).